Consider the following 417-residue polypeptide: MPSEVLTSYYDYPTHDQEAWWRDTGPLFGRFLKGAGYDVHTQYQYLVFFIKNILPSLGPYPARWRSTITPTGLPIEYSLNFQLNSRPLLRIGFEPLSRFSGTPQDPYNKIAAADLLNQLSKLQLHEFDTQLFNHFTNEFELSKSESESLQKQGGINGKSTVRSQTAFGFDLKGGRVAVKGYAFAGLKNRATGTPVGQLISNSIRNLEPQMHCWDSFSILNSYMEESDGWNEYSFVSWDCVDIERSRLKLYGVHNAVTWDKVKEMWTLGGRIENNATIKTGLELLQHMWSLLQINEGDRDYKGGFAADNGGKTLPIIWNYELNKGSPHPAPKFYFPVHGENDLQVSKSISEFFTHLGWQDHARQYPHLLRQIYPNQNISQTERLQAWISFAYNERTGPYLSVYYYSAERPPWGSDQVK.

Dimethylallyl diphosphate-binding residues include arginine 90, lysine 179, tyrosine 181, lysine 248, tyrosine 250, tyrosine 333, tyrosine 398, and tyrosine 402.

This sequence belongs to the tryptophan dimethylallyltransferase family.

It catalyses the reaction cyclo(L-tryptophyl-L-alanyl) + dimethylallyl diphosphate = preechinulin + diphosphate. It functions in the pathway secondary metabolite biosynthesis. Its pathway is alkaloid biosynthesis. In terms of biological role, prenyltransferase; part of the gene cluster that mediates the biosynthesis of echinulin family alkaloid. The pathway begins with the biosynthesis of the cyclic dipeptide cyclo-L-Trp-L-Ala (cyclo-TA) by the NRPS echPS via condensation of L-alanine and L-tryptophan. The prenyltransferase echPT1 then catalyzes the first prenylation step, a reverse prenylation reaction at C2, to yield preechinulin. Preechinulin is the substrate of the cytochrome P450 monooxygenase echP450 that catalyzes the formation of the double bond between C10 and C11 to produce neoechulin A. The unique prenyltransferase echPT2 functions as a competitive enzyme with echP450 for preechinulin metabolization and uses preechinulin for effective regiospecific prenylations. Preechinulin is prenylated by echPT2 at C5 or C7. C7-prenylation leads to accumulation of tardioxopiperazine B without further modification by echPT2. In contrast, the C5-prenylated tardioxopiperazine A can be prenylated again by echPT2, predominantly at C7 to form echinulin or less frequently at C4 to give variecolorin L. EchPT2 also accepts neoechilunin A to produce varlecolorin G (prenylation at C5) or isoechinulin A (prenylation at C7). EchPT2 further converts isoechinulin A into dehydroechinulin. Moreover, a yet unidentified enzyme can also convert neoechilunin A into neoechilunin B by introducing a double bond between positions C14 and C17 and thus provides a further substrate to echPT2 for C5 and C7 prenylation. This chain is Echinulin prenyltransferase 1, found in Aspergillus ruber (Eurotium rubrum).